Reading from the N-terminus, the 605-residue chain is MALSSTEVNRIRNFCIIAHIDHGKSTLADRLLEITHTLDRTQMASAQVLDDMDLERERGITIKSHAIQMKYRASDGLEYTLNLIDTPGHVDFSYEVSRSLAACEGALLIVDATQGVEAQTIANLYLALDAGLDIIPVINKIDLPSSDVEGVARQVMDLIGIKREEILQVSAKAGIGVPELIEAIVQRIPAPADNNHLPLRALIFDSVFDSYRGAVIYLRIVEGSLKKGDRVKFFASNKIFFAEEIGTMSMKRQPKSLLESGDVGYLICSIKDVKDAKVGDTVTLADNPAHERLSGYKEVKPMVFSGLYPINSNEFEDLRESLEKLALNDASLLYTPETSVALGFGFRCGFLGLLHMEIIQERLEREYGVNIITTVPNVEYRVVMTNGEVVIVDNPSKMPDTGRINLVEEPYVTMQIITLADYIGNIMKLGMERRGEYKNTDYLDTTRVIMHFEFPLAEIVFDFHDRLKSISKGYASMDYEYIGYRDSDLVKLDVLLNGETVDALSIVVHRSKAYDWGKKLCLKLKGIIPKQMYEVAIQAAIGSKVISRETISAMRKNVLAKCYGGDISRKRKLLEKQKEGKKRMKQVGRVEVPQEAFLALLNIDE.

The tr-type G domain maps to 9–192 (NRIRNFCIIA…AIVQRIPAPA (184 aa)). GTP is bound by residues 21–26 (DHGKST) and 139–142 (NKID).

It belongs to the TRAFAC class translation factor GTPase superfamily. Classic translation factor GTPase family. LepA subfamily.

Its subcellular location is the cell inner membrane. It carries out the reaction GTP + H2O = GDP + phosphate + H(+). In terms of biological role, required for accurate and efficient protein synthesis under certain stress conditions. May act as a fidelity factor of the translation reaction, by catalyzing a one-codon backward translocation of tRNAs on improperly translocated ribosomes. Back-translocation proceeds from a post-translocation (POST) complex to a pre-translocation (PRE) complex, thus giving elongation factor G a second chance to translocate the tRNAs correctly. Binds to ribosomes in a GTP-dependent manner. The protein is Elongation factor 4 of Pelodictyon phaeoclathratiforme (strain DSM 5477 / BU-1).